We begin with the raw amino-acid sequence, 413 residues long: Glucose-1-phosphate adenylyltransferase (413 aa).

Alpha-D-glucose 1-phosphate-binding positions include tyrosine 102, glycine 167, 182-183 (EK), and serine 200.

This sequence belongs to the bacterial/plant glucose-1-phosphate adenylyltransferase family. Homotetramer.

The catalysed reaction is alpha-D-glucose 1-phosphate + ATP + H(+) = ADP-alpha-D-glucose + diphosphate. It functions in the pathway glycan biosynthesis; glycogen biosynthesis. In terms of biological role, involved in the biosynthesis of ADP-glucose, a building block required for the elongation reactions to produce glycogen. Catalyzes the reaction between ATP and alpha-D-glucose 1-phosphate (G1P) to produce pyrophosphate and ADP-Glc. This Deinococcus geothermalis (strain DSM 11300 / CIP 105573 / AG-3a) protein is Glucose-1-phosphate adenylyltransferase.